Reading from the N-terminus, the 360-residue chain is UDP-N-acetylglucosamine--N-acetylmuramyl-(pentapeptide) pyrophosphoryl-undecaprenol N-acetylglucosamine transferase (360 aa).

UDP-N-acetyl-alpha-D-glucosamine-binding positions include 13–15 (TGG), Arg164, Ser192, and Gln293.

It belongs to the glycosyltransferase 28 family. MurG subfamily.

It localises to the cell inner membrane. The enzyme catalyses di-trans,octa-cis-undecaprenyl diphospho-N-acetyl-alpha-D-muramoyl-L-alanyl-D-glutamyl-meso-2,6-diaminopimeloyl-D-alanyl-D-alanine + UDP-N-acetyl-alpha-D-glucosamine = di-trans,octa-cis-undecaprenyl diphospho-[N-acetyl-alpha-D-glucosaminyl-(1-&gt;4)]-N-acetyl-alpha-D-muramoyl-L-alanyl-D-glutamyl-meso-2,6-diaminopimeloyl-D-alanyl-D-alanine + UDP + H(+). The protein operates within cell wall biogenesis; peptidoglycan biosynthesis. Cell wall formation. Catalyzes the transfer of a GlcNAc subunit on undecaprenyl-pyrophosphoryl-MurNAc-pentapeptide (lipid intermediate I) to form undecaprenyl-pyrophosphoryl-MurNAc-(pentapeptide)GlcNAc (lipid intermediate II). This chain is UDP-N-acetylglucosamine--N-acetylmuramyl-(pentapeptide) pyrophosphoryl-undecaprenol N-acetylglucosamine transferase, found in Chromobacterium violaceum (strain ATCC 12472 / DSM 30191 / JCM 1249 / CCUG 213 / NBRC 12614 / NCIMB 9131 / NCTC 9757 / MK).